The primary structure comprises 346 residues: Peripherin-2 (346 aa).

Over 1-18 (MALLKVKFDQKKRVKLAQ) the chain is Cytoplasmic. Residues 19–41 (GLWLMNWFSVLAGIIIFGLGLFL) traverse the membrane as a helical segment. At 42–62 (KIELRKRSDVMNNSESHFVPN) the chain is on the lumenal side. N-linked (GlcNAc...) asparagine glycosylation occurs at asparagine 53. A helical membrane pass occupies residues 63–79 (SLIGVGVLSCVFNSLAG). The Cytoplasmic portion of the chain corresponds to 80 to 101 (KICYDALDPAKYAKWKPWLKPY). The chain crosses the membrane as a helical span at residues 102 to 122 (LAVCVLFNVVLFLVALCCFLL). Over 123–264 (RGSLESTLAH…LSYYSNLMNT (142 aa)) the chain is Lumenal. Residues asparagine 229 and asparagine 263 are each glycosylated (N-linked (GlcNAc...) asparagine). A helical transmembrane segment spans residues 265-283 (TGAVTLLVWLFEVTITVGL). The Cytoplasmic portion of the chain corresponds to 284–346 (RYLHTALEGM…EDAGQAPAAG (63 aa)). The interval 341-346 (QAPAAG) is interaction with MREG.

This sequence belongs to the PRPH2/ROM1 family. As to quaternary structure, homodimer; disulfide-linked. Forms a homotetramer. Forms a heterotetramer with ROM1. Homotetramer and heterotetramer core complexes go on to form higher order complexes by formation of intermolecular disulfide bonds. Interacts with MREG. Interacts with STX3. Interacts with SNAP25. As to expression, retina (photoreceptor). In rim region of ROS (rod outer segment) disks.

The protein resides in the membrane. It is found in the cell projection. Its subcellular location is the cilium. It localises to the photoreceptor outer segment. The protein localises to the photoreceptor inner segment. Functionally, essential for retina photoreceptor outer segment disk morphogenesis, may also play a role with ROM1 in the maintenance of outer segment disk structure. Required for the maintenance of retinal outer nuclear layer thickness. Required for the correct development and organization of the photoreceptor inner segment. The chain is Peripherin-2 (PRPH2) from Bos taurus (Bovine).